Reading from the N-terminus, the 345-residue chain is MGSNSSPPAVLQLCYENVNGSCVKTPYSPGPRVLLYAVFGFGAVLAVFGNLLVMISILHFKQLHSPTNFLIASLACADFWVGVSVMPFSMVRSIESCWYFGRSFCTFHTCCDVAFCYSSLFHLSFISIDRYIAVTDPLVYPTKFTVSVSGICISISWILPLAYSGAVFYTGVYADGLEEVSDAVNCVGGCQVVVNQNWVLIDFLSFLIPTLVMIILYGNIFLVARQQAKKIETVGNKAESSSESYKARVARRERKAAKTLGITVVAFMISWLPYSIDSLVDAFMGFITPAYIYEICVWCAYYNSAMNPLIYALFYPWFKKAIKVIMSGQVFKNSSATMNLFSEQI.

The Extracellular portion of the chain corresponds to 1–32 (MGSNSSPPAVLQLCYENVNGSCVKTPYSPGPR). Asparagine 19 carries N-linked (GlcNAc...) asparagine glycosylation. 2 cysteine pairs are disulfide-bonded: cysteine 22–cysteine 186 and cysteine 105–cysteine 190. A helical membrane pass occupies residues 33–53 (VLLYAVFGFGAVLAVFGNLLV). Topologically, residues 54–68 (MISILHFKQLHSPTN) are cytoplasmic. The chain crosses the membrane as a helical span at residues 69-89 (FLIASLACADFWVGVSVMPFS). Topologically, residues 90 to 107 (MVRSIESCWYFGRSFCTF) are extracellular. The chain crosses the membrane as a helical span at residues 108–128 (HTCCDVAFCYSSLFHLSFISI). Over 129 to 147 (DRYIAVTDPLVYPTKFTVS) the chain is Cytoplasmic. The helical transmembrane segment at 148–168 (VSGICISISWILPLAYSGAVF) threads the bilayer. The Extracellular portion of the chain corresponds to 169 to 202 (YTGVYADGLEEVSDAVNCVGGCQVVVNQNWVLID). The chain crosses the membrane as a helical span at residues 203-223 (FLSFLIPTLVMIILYGNIFLV). Topologically, residues 224–259 (ARQQAKKIETVGNKAESSSESYKARVARRERKAAKT) are cytoplasmic. The helical transmembrane segment at 260 to 276 (LGITVVAFMISWLPYSI) threads the bilayer. Topologically, residues 277-282 (DSLVDA) are extracellular. A helical membrane pass occupies residues 283–302 (FMGFITPAYIYEICVWCAYY). Over 303–345 (NSAMNPLIYALFYPWFKKAIKVIMSGQVFKNSSATMNLFSEQI) the chain is Cytoplasmic.

The protein belongs to the G-protein coupled receptor 1 family.

The protein localises to the cell membrane. Olfactory receptor specific for trace amines, such as beta-phenylethylamine (beta-PEA). Trace amine compounds are enriched in animal body fluids and act on trace amine-associated receptors (TAARs) to elicit both intraspecific and interspecific innate behaviors. Beta-PEA-binding causes a conformation change that triggers signaling via G(s)-class of G alpha proteins (GNAL or GNAS). This Rattus norvegicus (Rat) protein is Trace amine-associated receptor 6 (Taar6).